Consider the following 236-residue polypeptide: Ras-related protein RabY (236 aa).

Residue 18–25 (GDRKTGKT) participates in GTP binding. Residues 40–48 (YRQTNLLHF) carry the Effector region motif. GTP is bound by residues 66 to 70 (DSQAD) and 126 to 129 (NKSD). Residues 192–225 (QQQQQQQQQQQQQQQQQQQQQQQQQQQQQQQHQQ) show a composition bias toward low complexity. Residues 192–236 (QQQQQQQQQQQQQQQQQQQQQQQQQQQQQQQHQQSSKTKIGCLIQ) are disordered. C233 is subject to Cysteine methyl ester. C233 carries the S-geranylgeranyl cysteine lipid modification. The propeptide at 234-236 (LIQ) is removed in mature form.

Belongs to the small GTPase superfamily. Rab family.

The protein localises to the cell membrane. The chain is Ras-related protein RabY (rabY) from Dictyostelium discoideum (Social amoeba).